We begin with the raw amino-acid sequence, 356 residues long: Protein pelota homolog (356 aa).

This sequence belongs to the eukaryotic release factor 1 family. Pelota subfamily. As to quaternary structure, monomer. Requires a divalent metal cation as cofactor.

The protein resides in the cytoplasm. May function in recognizing stalled ribosomes, interact with stem-loop structures in stalled mRNA molecules, and effect endonucleolytic cleavage of the mRNA. May play a role in the release non-functional ribosomes and degradation of damaged mRNAs. Has endoribonuclease activity. The sequence is that of Protein pelota homolog from Pyrococcus furiosus (strain ATCC 43587 / DSM 3638 / JCM 8422 / Vc1).